A 1082-amino-acid polypeptide reads, in one-letter code: M cell-type agglutination protein mam3 (1082 aa).

An N-terminal signal peptide occupies residues 1–18 (MSIALAFFILVLLGFSWA). Asparagine 28, asparagine 56, and asparagine 82 each carry an N-linked (GlcNAc...) asparagine glycan. A disordered region spans residues 353-374 (TSSSSTDQLTSASPISSSVISP). N-linked (GlcNAc...) asparagine glycosylation is found at asparagine 451, asparagine 475, asparagine 495, asparagine 520, asparagine 548, asparagine 588, asparagine 613, and asparagine 638. 11 consecutive repeat copies span residues 646 to 681 (QTTT…VPTP), 682 to 717 (SWIT…IPTP), 718 to 753 (SWVT…VPTP), 754 to 789 (SWVT…IPTP), 790 to 825 (SWVT…IPTP), 826 to 861 (SWVT…VPTP), 862 to 897 (SWVT…IPTP), 898 to 933 (SWVT…IPTP), 934 to 969 (SWVT…IPTP), 970 to 1005 (SWVT…IPTP), and 1006 to 1041 (SWVT…IPQQ). An 11 X 36 AA approximate tandem repeats region spans residues 720-1043 (VTETVTSGSI…VLVDIPQQHA (324 aa)).

This sequence belongs to the mam3/map4 family.

The protein localises to the cell surface. Functionally, m cell-type specific protein involved in agglutination during conjugation. In Schizosaccharomyces pombe (strain 972 / ATCC 24843) (Fission yeast), this protein is M cell-type agglutination protein mam3.